The following is a 231-amino-acid chain: Putative histone H1.9 (231 aa).

An H15 domain is found at 113-177 (QKPSTSKVIL…GSAGSFTLGK (65 aa)). A Phosphoserine modification is found at S135. The segment at 177–214 (KKQASKSKLKVKRQRQQRWRSGQRPFGQHRSLLGSKQG) is disordered. Residues 179-194 (QASKSKLKVKRQRQQR) show a composition bias toward basic residues.

It belongs to the histone H1/H5 family. As to expression, expressed exclusively in the testis.

The protein resides in the nucleus. The protein localises to the chromosome. DNA-binding protein that may be implicated in chromatin remodeling and/or transcriptional regulation during spermiogenesis, the process of spermatid maturation into spermatozoa. This chain is Putative histone H1.9, found in Homo sapiens (Human).